We begin with the raw amino-acid sequence, 610 residues long: Elongation factor 4 (610 aa).

Residues 13-195 (SHIRNFSIVA…AIVHKLPAPK (183 aa)) form the tr-type G domain. Residues 25-30 (DHGKST) and 142-145 (NKID) each bind GTP.

This sequence belongs to the TRAFAC class translation factor GTPase superfamily. Classic translation factor GTPase family. LepA subfamily.

The protein resides in the cell inner membrane. The catalysed reaction is GTP + H2O = GDP + phosphate + H(+). Its function is as follows. Required for accurate and efficient protein synthesis under certain stress conditions. May act as a fidelity factor of the translation reaction, by catalyzing a one-codon backward translocation of tRNAs on improperly translocated ribosomes. Back-translocation proceeds from a post-translocation (POST) complex to a pre-translocation (PRE) complex, thus giving elongation factor G a second chance to translocate the tRNAs correctly. Binds to ribosomes in a GTP-dependent manner. In Rhizobium johnstonii (strain DSM 114642 / LMG 32736 / 3841) (Rhizobium leguminosarum bv. viciae), this protein is Elongation factor 4.